A 702-amino-acid chain; its full sequence is Arginine decarboxylase 1, chloroplastic (702 aa).

The N-terminal 52 residues, 1 to 52 (MPALAFVDTPIDTFSSIFTPSSVSTAVVDGSCHWSPSLSSSLYRIDGWGAPY), are a transit peptide targeting the chloroplast. K136 carries the post-translational modification N6-(pyridoxal phosphate)lysine. Pyridoxal 5'-phosphate contacts are provided by residues S288, G325, and 374–377 (ESGR). 320 to 330 (IDIGGGLGIDY) contacts substrate. Residue 436–437 (YV) participates in substrate binding. C524 (proton donor; shared with dimeric partner) is an active-site residue. D525 is a binding site for substrate. Pyridoxal 5'-phosphate is bound at residue Y565.

It belongs to the Orn/Lys/Arg decarboxylase class-II family. SpeA subfamily. Homodimer. Only the dimer is catalytically active, as the active sites are constructed of residues from both monomers. May form a head-to-tail homodimer. Homodimer and heterodimer with ADC2. Pyridoxal 5'-phosphate is required as a cofactor. Requires Mg(2+) as cofactor.

It is found in the plastid. It localises to the chloroplast. The protein localises to the cytoplasm. The protein resides in the cytosol. The enzyme catalyses L-arginine + H(+) = agmatine + CO2. Its pathway is amine and polyamine biosynthesis; agmatine biosynthesis; agmatine from L-arginine: step 1/1. Functionally, required for the biosynthesis of putrescine. Catalyzes the first step of polyamine (PA) biosynthesis to produce putrescine from arginine. Is a minor contributor to basal arginine decarboxylase (ADC) activity and putrescine biosynthesis. Accumulation of putrescine plays a positive role in freezing tolerance. Production of polyamines is essential for normal seed development. Controls PA homeostasis which is crucial for normal plant growth and development. The polypeptide is Arginine decarboxylase 1, chloroplastic (Arabidopsis thaliana (Mouse-ear cress)).